We begin with the raw amino-acid sequence, 274 residues long: TATA box-binding protein-associated factor RNA polymerase I subunit D (274 aa).

Over residues 1–19 (MDSLNYTTACDSAVETENQ) the composition is skewed to polar residues. Disordered regions lie at residues 1-45 (MDSL…RQRN) and 84-111 (NKKRKRKKKKYKPTGRSVGRPKGRRTTR). A Phosphoserine modification is found at Ser20. Basic residues predominate over residues 84-110 (NKKRKRKKKKYKPTGRSVGRPKGRRTT). Ser132 and Ser229 each carry phosphoserine.

As to quaternary structure, component of the transcription factor SL1/TIF-IB complex, composed of TBP and at least TAF1A, TAF1B, TAF1C and TAF1D. Interacts with UBTF.

It localises to the nucleus. Functionally, component of the transcription factor SL1/TIF-IB complex, which is involved in the assembly of the PIC (preinitiation complex) during RNA polymerase I-dependent transcription. The rate of PIC formation probably is primarily dependent on the rate of association of SL1/TIF-IB with the rDNA promoter. SL1/TIF-IB is involved in stabilization of nucleolar transcription factor 1/UBTF on rDNA. Formation of SL1/TIF-IB excludes the association of TBP with TFIID subunits. The protein is TATA box-binding protein-associated factor RNA polymerase I subunit D (TAF1D) of Bos taurus (Bovine).